The primary structure comprises 469 residues: GTPase Der (469 aa).

EngA-type G domains are found at residues 3 to 167 and 176 to 349; these read PTLV…PEEE and PKIA…AAAF. GTP is bound by residues 9–16, 56–60, 119–122, 182–189, 229–233, and 294–297; these read GRPNVGKS, DTGGL, NKAE, DTAGV, and NKWD. Positions 350 to 436 constitute a KH-like domain; that stretch reads IKLSTPKLTR…RIQIKEDEGK (87 aa). Positions 432 to 443 are enriched in basic and acidic residues; the sequence is EDEGKNPFEGKK. The tract at residues 432–469 is disordered; the sequence is EDEGKNPFEGKKRAPLSESEATRMRRKKRVRRKVYGAD. Over residues 455-469 the composition is skewed to basic residues; sequence MRRKKRVRRKVYGAD.

It belongs to the TRAFAC class TrmE-Era-EngA-EngB-Septin-like GTPase superfamily. EngA (Der) GTPase family. As to quaternary structure, associates with the 50S ribosomal subunit.

In terms of biological role, GTPase that plays an essential role in the late steps of ribosome biogenesis. The chain is GTPase Der from Thiobacillus denitrificans (strain ATCC 25259 / T1).